Reading from the N-terminus, the 296-residue chain is Large ribosomal subunit protein uL15m (296 aa).

Residues 1 to 21 (MAGPLQGGGARALDLLRGLPR) constitute a mitochondrion transit peptide. The disordered stretch occupies residues 22–66 (VSLANLKPNPGSKKPERRPRGRRRGRKCGRGHKGERQRGTRPRLG). Residues 36–52 (PERRPRGRRRGRKCGRG) show a composition bias toward basic residues.

Belongs to the universal ribosomal protein uL15 family. Component of the mitochondrial large ribosomal subunit (mt-LSU). Mature mammalian 55S mitochondrial ribosomes consist of a small (28S) and a large (39S) subunit. The 28S small subunit contains a 12S ribosomal RNA (12S mt-rRNA) and 30 different proteins. The 39S large subunit contains a 16S rRNA (16S mt-rRNA), a copy of mitochondrial valine transfer RNA (mt-tRNA(Val)), which plays an integral structural role, and 52 different proteins.

The protein localises to the mitochondrion. This Homo sapiens (Human) protein is Large ribosomal subunit protein uL15m (MRPL15).